The following is a 350-amino-acid chain: Phosphoribosylformylglycinamidine cyclo-ligase (350 aa).

Belongs to the AIR synthase family.

Its subcellular location is the cytoplasm. The enzyme catalyses 2-formamido-N(1)-(5-O-phospho-beta-D-ribosyl)acetamidine + ATP = 5-amino-1-(5-phospho-beta-D-ribosyl)imidazole + ADP + phosphate + H(+). Its pathway is purine metabolism; IMP biosynthesis via de novo pathway; 5-amino-1-(5-phospho-D-ribosyl)imidazole from N(2)-formyl-N(1)-(5-phospho-D-ribosyl)glycinamide: step 2/2. This is Phosphoribosylformylglycinamidine cyclo-ligase from Nitratidesulfovibrio vulgaris (strain DSM 19637 / Miyazaki F) (Desulfovibrio vulgaris).